Consider the following 317-residue polypeptide: ADP-L-glycero-D-manno-heptose-6-epimerase (317 aa).

NADP(+)-binding positions include 10–11 (FI), 31–32 (DD), lysine 38, lysine 53, 76–80 (QGACS), and asparagine 93. The Proton acceptor role is filled by tyrosine 140. Lysine 144 provides a ligand contact to NADP(+). Residue asparagine 169 coordinates substrate. Isoleucine 170 and lysine 178 together coordinate NADP(+). The active-site Proton acceptor is lysine 178. Residues alanine 180, histidine 187, 201-204 (FEGC), arginine 214, and tyrosine 278 contribute to the substrate site.

It belongs to the NAD(P)-dependent epimerase/dehydratase family. HldD subfamily. In terms of assembly, homopentamer. It depends on NADP(+) as a cofactor.

It catalyses the reaction ADP-D-glycero-beta-D-manno-heptose = ADP-L-glycero-beta-D-manno-heptose. It participates in nucleotide-sugar biosynthesis; ADP-L-glycero-beta-D-manno-heptose biosynthesis; ADP-L-glycero-beta-D-manno-heptose from D-glycero-beta-D-manno-heptose 7-phosphate: step 4/4. Its function is as follows. Catalyzes the interconversion between ADP-D-glycero-beta-D-manno-heptose and ADP-L-glycero-beta-D-manno-heptose via an epimerization at carbon 6 of the heptose. The chain is ADP-L-glycero-D-manno-heptose-6-epimerase from Nitrosococcus oceani (strain ATCC 19707 / BCRC 17464 / JCM 30415 / NCIMB 11848 / C-107).